We begin with the raw amino-acid sequence, 307 residues long: Transcription factor bHLH127 (307 aa).

Disordered regions lie at residues Ser-41–Gln-68 and Pro-101–His-155. Pro residues predominate over residues Ala-110–Ser-119. In terms of domain architecture, bHLH spans Arg-150 to Leu-199.

It belongs to the bHLH protein family. As to quaternary structure, homodimer.

Its subcellular location is the nucleus. The chain is Transcription factor bHLH127 (BHLH127) from Arabidopsis thaliana (Mouse-ear cress).